A 457-amino-acid chain; its full sequence is RuvB-like helicase 1 (457 aa).

72–79 lines the ATP pocket; that stretch reads GAPGTGKT.

This sequence belongs to the RuvB family. In terms of assembly, may form heterododecamers with RVB2. Component of the SWR1 chromatin remodeling complex, the INO80 chromatin remodeling complex, and of the R2TP complex.

The protein resides in the nucleus. The enzyme catalyses ATP + H2O = ADP + phosphate + H(+). In terms of biological role, DNA helicase which participates in several chromatin remodeling complexes, including the SWR1 and the INO80 complexes. The SWR1 complex mediates the ATP-dependent exchange of histone H2A for the H2A variant HZT1 leading to transcriptional regulation of selected genes by chromatin remodeling. The INO80 complex remodels chromatin by shifting nucleosomes and is involved in DNA repair. Also involved in pre-rRNA processing. This chain is RuvB-like helicase 1 (RBV1), found in Debaryomyces hansenii (strain ATCC 36239 / CBS 767 / BCRC 21394 / JCM 1990 / NBRC 0083 / IGC 2968) (Yeast).